Consider the following 182-residue polypeptide: MSKQLAAQVPAEPVVLGKMGSSYGIRGWLRVFSSTEDAESIFDYQPWFIQKAGQWQQVQLESWKHHNQDLIIKLKGVDDRDAANLLTNCEIVVDSSQLPALEEGDYYWKDLMGCQVVTAEGYDLGKVIDMMETGSNDVLVIKANLKDAFGIKERLVPFLYGQVIKKVDLATRTIEVDWDPGF.

In terms of domain architecture, PRC barrel spans Glu-102–Phe-182.

The protein belongs to the RimM family. As to quaternary structure, binds ribosomal protein uS19.

The protein localises to the cytoplasm. Its function is as follows. An accessory protein needed during the final step in the assembly of 30S ribosomal subunit, possibly for assembly of the head region. Essential for efficient processing of 16S rRNA. May be needed both before and after RbfA during the maturation of 16S rRNA. It has affinity for free ribosomal 30S subunits but not for 70S ribosomes. The chain is Ribosome maturation factor RimM from Salmonella gallinarum (strain 287/91 / NCTC 13346).